The sequence spans 385 residues: Probable tRNA sulfurtransferase (385 aa).

The region spanning asparagine 57 to lysine 161 is the THUMP domain. Residues methionine 181–leucine 182, tyrosine 206–tyrosine 207, arginine 263, glycine 285, and glutamine 294 each bind ATP.

Belongs to the ThiI family.

The protein localises to the cytoplasm. The enzyme catalyses [ThiI sulfur-carrier protein]-S-sulfanyl-L-cysteine + a uridine in tRNA + 2 reduced [2Fe-2S]-[ferredoxin] + ATP + H(+) = [ThiI sulfur-carrier protein]-L-cysteine + a 4-thiouridine in tRNA + 2 oxidized [2Fe-2S]-[ferredoxin] + AMP + diphosphate. It carries out the reaction [ThiS sulfur-carrier protein]-C-terminal Gly-Gly-AMP + S-sulfanyl-L-cysteinyl-[cysteine desulfurase] + AH2 = [ThiS sulfur-carrier protein]-C-terminal-Gly-aminoethanethioate + L-cysteinyl-[cysteine desulfurase] + A + AMP + 2 H(+). The protein operates within cofactor biosynthesis; thiamine diphosphate biosynthesis. Its function is as follows. Catalyzes the ATP-dependent transfer of a sulfur to tRNA to produce 4-thiouridine in position 8 of tRNAs, which functions as a near-UV photosensor. Also catalyzes the transfer of sulfur to the sulfur carrier protein ThiS, forming ThiS-thiocarboxylate. This is a step in the synthesis of thiazole, in the thiamine biosynthesis pathway. The sulfur is donated as persulfide by IscS. The sequence is that of Probable tRNA sulfurtransferase from Clostridium botulinum (strain Alaska E43 / Type E3).